The sequence spans 347 residues: Holliday junction branch migration complex subunit RuvB (347 aa).

Residues 1-186 (MKDENSISFL…FGITARFELY (186 aa)) are large ATPase domain (RuvB-L). ATP-binding positions include Leu25, Arg26, Gly67, Lys70, Thr71, Thr72, 133 to 135 (EDY), Arg176, Tyr186, and Arg223. Mg(2+) is bound at residue Thr71. The segment at 187-257 (SEIELVEIIK…IVSIGLEMLR (71 aa)) is small ATPAse domain (RuvB-S). Residues 260–347 (GEGLDEQDRN…GLNENQRVSF (88 aa)) form a head domain (RuvB-H) region. The DNA site is built by Arg315 and Arg320.

The protein belongs to the RuvB family. Homohexamer. Forms an RuvA(8)-RuvB(12)-Holliday junction (HJ) complex. HJ DNA is sandwiched between 2 RuvA tetramers; dsDNA enters through RuvA and exits via RuvB. An RuvB hexamer assembles on each DNA strand where it exits the tetramer. Each RuvB hexamer is contacted by two RuvA subunits (via domain III) on 2 adjacent RuvB subunits; this complex drives branch migration. In the full resolvosome a probable DNA-RuvA(4)-RuvB(12)-RuvC(2) complex forms which resolves the HJ.

It localises to the cytoplasm. The catalysed reaction is ATP + H2O = ADP + phosphate + H(+). Its function is as follows. The RuvA-RuvB-RuvC complex processes Holliday junction (HJ) DNA during genetic recombination and DNA repair, while the RuvA-RuvB complex plays an important role in the rescue of blocked DNA replication forks via replication fork reversal (RFR). RuvA specifically binds to HJ cruciform DNA, conferring on it an open structure. The RuvB hexamer acts as an ATP-dependent pump, pulling dsDNA into and through the RuvAB complex. RuvB forms 2 homohexamers on either side of HJ DNA bound by 1 or 2 RuvA tetramers; 4 subunits per hexamer contact DNA at a time. Coordinated motions by a converter formed by DNA-disengaged RuvB subunits stimulates ATP hydrolysis and nucleotide exchange. Immobilization of the converter enables RuvB to convert the ATP-contained energy into a lever motion, pulling 2 nucleotides of DNA out of the RuvA tetramer per ATP hydrolyzed, thus driving DNA branch migration. The RuvB motors rotate together with the DNA substrate, which together with the progressing nucleotide cycle form the mechanistic basis for DNA recombination by continuous HJ branch migration. Branch migration allows RuvC to scan DNA until it finds its consensus sequence, where it cleaves and resolves cruciform DNA. The chain is Holliday junction branch migration complex subunit RuvB from Borreliella burgdorferi (strain ATCC 35210 / DSM 4680 / CIP 102532 / B31) (Borrelia burgdorferi).